Reading from the N-terminus, the 207-residue chain is Probable RNA 2'-phosphotransferase (207 aa).

This sequence belongs to the KptA/TPT1 family.

Its function is as follows. Removes the 2'-phosphate from RNA via an intermediate in which the phosphate is ADP-ribosylated by NAD followed by a presumed transesterification to release the RNA and generate ADP-ribose 1''-2''-cyclic phosphate (APPR&gt;P). May function as an ADP-ribosylase. This Methanosarcina mazei (strain ATCC BAA-159 / DSM 3647 / Goe1 / Go1 / JCM 11833 / OCM 88) (Methanosarcina frisia) protein is Probable RNA 2'-phosphotransferase.